The sequence spans 457 residues: Non-structural protein V (457 aa).

2 disordered regions span residues 26–104 (KTYG…DPDD) and 193–403 (FVPK…MPIK). Polar residues-rich tracts occupy residues 28 to 37 (YGRSSIQQPS) and 77 to 96 (DLSSVTSSDGTIGQRVSNTR). A compositionally biased stretch (acidic residues) spans 240-252 (SDDEDENQLEYED). S257 bears the Phosphoserine; by host mark. Basic and acidic residues predominate over residues 296–317 (FPEKEETPDVRRKDSLMQDSCK). S350 is modified (phosphoserine; by host). The Zn(2+) site is built by H406, C425, C429, C441, C443, C446, C450, and C453.

Belongs to the paramyxoviruses V protein family. In terms of assembly, interacts with host IFIH1/MDA5, DHX58/LGP2, STAT1 and STAT2.

It localises to the host cytoplasm. Plays an essential role in the inhibition of host immune response. Prevents the establishment of cellular antiviral state by blocking interferon-alpha/beta (IFN-alpha/beta) production and signaling pathway. Interacts with host IFIH1/MDA5 and DHX58/LGP2 to inhibit the transduction pathway involved in the activation of IFN-beta promoter, thus protecting the virus against cell antiviral state. Blocks the type I interferon signaling pathway by interacting with host STAT1 and STAT2 and thereby inhibiting their phosphorylation and subsequent nuclear translocation. Efficiently blocks the type II interferon signaling pathway. The protein is Non-structural protein V (P/V/C) of Hendra virus (isolate Horse/Autralia/Hendra/1994).